The sequence spans 71 residues: U3-scytotoxin-Sth1h (71 aa).

A signal peptide spans 1–33 (MSQNSITSYKMGFAKHFFLFAVLLCATAMYSVA). A propeptide spanning residues 34–39 (EPAQER) is cleaved from the precursor. Cystine bridges form between C46/C60, C53/C64, and C59/C69.

As to expression, expressed by the venom gland.

It is found in the secreted. Probable insect neurotoxin with ion channel impairing activity. Does not show activity on 45 human receptors from 9 families (5-hydroxytryptamine, adrenergic, dopamine, muscarinic, histamine, neurotransmitter, opioid, sigma, and gaba(A) receptors). In vivo, when mixed with U3-SYTX-Sth1a does not cause paralytic or lethal activity when injected into crickets. It is noteworthy that crickets are evolutionarily distant from prey species. In Scytodes thoracica (Spitting spider), this protein is U3-scytotoxin-Sth1h.